The following is a 762-amino-acid chain: Phospholipase D alpha 4 (762 aa).

The 116-residue stretch at 1–116 (MELEEQKKYF…VINGFFPLIA (116 aa)) folds into the C2 domain. A Ca(2+)-binding site is contributed by aspartate 172. The 39-residue stretch at 301–339 (TAFAHHQKTITLDTRVTNSSTKEREIMSFLGGFDLCDGR) folds into the PLD phosphodiesterase 1 domain. Residues histidine 306, lysine 308, and aspartate 313 contribute to the active site. Histidine 306 is an a 1,2-diacyl-sn-glycero-3-phosphate binding site. Ca(2+) contacts are provided by histidine 345 and histidine 377. The a 1,2-diacyl-sn-glycero-3-phosphate site is built by glutamine 477 and histidine 615. The 28-residue stretch at 610–637 (FMVYVHSKLMIVDDTYILIGSANINQRS) folds into the PLD phosphodiesterase 2 domain. Active-site residues include histidine 615, lysine 617, and aspartate 622. Glutamate 671 contributes to the Ca(2+) binding site.

This sequence belongs to the phospholipase D family. C2-PLD subfamily. Ca(2+) serves as cofactor. As to expression, expressed in roots, leaves, stems, siliques,flowers and inflorescences.

The protein resides in the cell membrane. The catalysed reaction is a 1,2-diacyl-sn-glycero-3-phosphocholine + H2O = a 1,2-diacyl-sn-glycero-3-phosphate + choline + H(+). Hydrolyzes glycerol-phospholipids at the terminal phosphodiesteric bond to generate phosphatidic acids (PA). Promotes growth and plays a role in nitrogen signaling. The protein is Phospholipase D alpha 4 of Arabidopsis thaliana (Mouse-ear cress).